Reading from the N-terminus, the 294-residue chain is Maltose/maltodextrin import ATP-binding protein MalK (294 aa).

In terms of domain architecture, ABC transporter spans 4 to 233; the sequence is VQLRNVTKAW…PADRFVAGFI (230 aa). 36 to 43 is an ATP binding site; it reads GPSGCGKS.

It belongs to the ABC transporter superfamily. Maltooligosaccharide importer (TC 3.A.1.1.1) family. In terms of assembly, the complex is composed of two ATP-binding proteins (MalK), two transmembrane proteins (MalG and MalK) and a solute-binding protein (MalE).

The protein localises to the cell inner membrane. It carries out the reaction D-maltose(out) + ATP + H2O = D-maltose(in) + ADP + phosphate + H(+). Functionally, part of the ABC transporter complex MalEFGK involved in maltose/maltodextrin import. Responsible for energy coupling to the transport system. In Klebsiella aerogenes (Enterobacter aerogenes), this protein is Maltose/maltodextrin import ATP-binding protein MalK.